Reading from the N-terminus, the 663-residue chain is DNA ligase 1 (663 aa).

NAD(+)-binding positions include 30-34 (DAEYD) and 78-79 (SL). Catalysis depends on K105, which acts as the N6-AMP-lysine intermediate. NAD(+) contacts are provided by R126, E161, and K294. C389, C392, C407, and C412 together coordinate Zn(2+). The BRCT domain maps to 574-663 (AAGAPLAGKT…WAQLIEAKLV (90 aa)).

Belongs to the NAD-dependent DNA ligase family. LigA subfamily. The cofactor is Mg(2+). Requires Mn(2+) as cofactor.

The catalysed reaction is NAD(+) + (deoxyribonucleotide)n-3'-hydroxyl + 5'-phospho-(deoxyribonucleotide)m = (deoxyribonucleotide)n+m + AMP + beta-nicotinamide D-nucleotide.. Its function is as follows. DNA ligase that catalyzes the formation of phosphodiester linkages between 5'-phosphoryl and 3'-hydroxyl groups in double-stranded DNA using NAD as a coenzyme and as the energy source for the reaction. It is essential for DNA replication and repair of damaged DNA. The sequence is that of DNA ligase 1 from Nocardia farcinica (strain IFM 10152).